Here is a 700-residue protein sequence, read N- to C-terminus: Elongation factor G (700 aa).

The tr-type G domain occupies Ser-10 to Leu-286. GTP contacts are provided by residues Ala-19–Thr-26, Asp-83–His-87, and Asn-137–Asp-140.

It belongs to the TRAFAC class translation factor GTPase superfamily. Classic translation factor GTPase family. EF-G/EF-2 subfamily.

It localises to the cytoplasm. Catalyzes the GTP-dependent ribosomal translocation step during translation elongation. During this step, the ribosome changes from the pre-translocational (PRE) to the post-translocational (POST) state as the newly formed A-site-bound peptidyl-tRNA and P-site-bound deacylated tRNA move to the P and E sites, respectively. Catalyzes the coordinated movement of the two tRNA molecules, the mRNA and conformational changes in the ribosome. This is Elongation factor G from Mycolicibacterium gilvum (strain PYR-GCK) (Mycobacterium gilvum (strain PYR-GCK)).